Consider the following 203-residue polypeptide: Ribosomal RNA large subunit methyltransferase E (203 aa).

5 residues coordinate S-adenosyl-L-methionine: Gly-60, Trp-62, Asp-79, Asp-95, and Asp-119. Residue Lys-159 is the Proton acceptor of the active site.

It belongs to the class I-like SAM-binding methyltransferase superfamily. RNA methyltransferase RlmE family.

The protein resides in the cytoplasm. It catalyses the reaction uridine(2552) in 23S rRNA + S-adenosyl-L-methionine = 2'-O-methyluridine(2552) in 23S rRNA + S-adenosyl-L-homocysteine + H(+). Its function is as follows. Specifically methylates the uridine in position 2552 of 23S rRNA at the 2'-O position of the ribose in the fully assembled 50S ribosomal subunit. In Pelagibacter ubique (strain HTCC1062), this protein is Ribosomal RNA large subunit methyltransferase E.